The primary structure comprises 388 residues: Succinate--CoA ligase [ADP-forming] subunit beta (388 aa).

The region spanning 9 to 245 (KELLASYGLP…KSQENERELK (237 aa)) is the ATP-grasp domain. Residues Lys46, 53-55 (GRG), Glu100, Tyr103, and Glu108 each bind ATP. 2 residues coordinate Mg(2+): Asn200 and Asp214. Substrate is bound by residues Asn265 and 322–324 (GIV).

The protein belongs to the succinate/malate CoA ligase beta subunit family. As to quaternary structure, heterotetramer of two alpha and two beta subunits. Mg(2+) serves as cofactor.

It carries out the reaction succinate + ATP + CoA = succinyl-CoA + ADP + phosphate. The enzyme catalyses GTP + succinate + CoA = succinyl-CoA + GDP + phosphate. It functions in the pathway carbohydrate metabolism; tricarboxylic acid cycle; succinate from succinyl-CoA (ligase route): step 1/1. Succinyl-CoA synthetase functions in the citric acid cycle (TCA), coupling the hydrolysis of succinyl-CoA to the synthesis of either ATP or GTP and thus represents the only step of substrate-level phosphorylation in the TCA. The beta subunit provides nucleotide specificity of the enzyme and binds the substrate succinate, while the binding sites for coenzyme A and phosphate are found in the alpha subunit. In Neisseria gonorrhoeae (strain ATCC 700825 / FA 1090), this protein is Succinate--CoA ligase [ADP-forming] subunit beta.